The primary structure comprises 435 residues: Actin-like protein 7A (435 aa).

2 disordered regions span residues 1–20 and 29–65; these read MWAP…VGNQ and QTAS…ERPK. The interval 31–51 is required for interaction with TES; sequence ASLRDGPAKRAVWVRRRSSEP. Over residues 47–65 the composition is skewed to basic and acidic residues; that stretch reads RSSEPQEPTESKAAKERPK.

Belongs to the actin family. Interacts (via N-terminus) with TES (via LIM domain 2). Heterodimer with TES; the heterodimer interacts with ENAH to form a heterotrimer. Interacts with ACTL9. Interacts with CYLC1; the interaction may be relevant for proper acrosome attachment to the nuclear envelope.

It localises to the cytoplasm. The protein localises to the cytoskeleton. It is found in the golgi apparatus. Its subcellular location is the nucleus. Essential for normal spermatogenesis and male fertility. Required for normal sperm head morphology, acroplaxome formation, acrosome attachment, and acrosome granule stability. May anchor and stabilize acrosomal adherence to the acroplaxome at least in part by facilitating the presence of F-actin in the subacrosomal space. May play an important role in formation and fusion of Golgi-derived vesicles during acrosome biogenesis. The protein is Actin-like protein 7A (ACTL7A) of Macaca fascicularis (Crab-eating macaque).